The chain runs to 470 residues: Histidine--tRNA ligase (470 aa).

A disordered region spans residues 69–99 (GIDPILPPNRQAEKDKSGETGKDKSGETGSE). The span at 79–94 (QAEKDKSGETGKDKSG) shows a compositional bias: basic and acidic residues.

The protein belongs to the class-II aminoacyl-tRNA synthetase family. Homodimer.

The protein resides in the cytoplasm. It carries out the reaction tRNA(His) + L-histidine + ATP = L-histidyl-tRNA(His) + AMP + diphosphate + H(+). The polypeptide is Histidine--tRNA ligase (Nostoc punctiforme (strain ATCC 29133 / PCC 73102)).